The sequence spans 475 residues: Aspartyl/glutamyl-tRNA(Asn/Gln) amidotransferase subunit B (475 aa).

The protein belongs to the GatB/GatE family. GatB subfamily. As to quaternary structure, heterotrimer of A, B and C subunits.

The catalysed reaction is L-glutamyl-tRNA(Gln) + L-glutamine + ATP + H2O = L-glutaminyl-tRNA(Gln) + L-glutamate + ADP + phosphate + H(+). It carries out the reaction L-aspartyl-tRNA(Asn) + L-glutamine + ATP + H2O = L-asparaginyl-tRNA(Asn) + L-glutamate + ADP + phosphate + 2 H(+). In terms of biological role, allows the formation of correctly charged Asn-tRNA(Asn) or Gln-tRNA(Gln) through the transamidation of misacylated Asp-tRNA(Asn) or Glu-tRNA(Gln) in organisms which lack either or both of asparaginyl-tRNA or glutaminyl-tRNA synthetases. The reaction takes place in the presence of glutamine and ATP through an activated phospho-Asp-tRNA(Asn) or phospho-Glu-tRNA(Gln). The protein is Aspartyl/glutamyl-tRNA(Asn/Gln) amidotransferase subunit B of Agathobacter rectalis (strain ATCC 33656 / DSM 3377 / JCM 17463 / KCTC 5835 / VPI 0990) (Eubacterium rectale).